A 116-amino-acid chain; its full sequence is Large ribosomal subunit protein bL20 (116 aa).

Belongs to the bacterial ribosomal protein bL20 family.

Binds directly to 23S ribosomal RNA and is necessary for the in vitro assembly process of the 50S ribosomal subunit. It is not involved in the protein synthesizing functions of that subunit. The sequence is that of Large ribosomal subunit protein bL20 from Bacteroides fragilis (strain ATCC 25285 / DSM 2151 / CCUG 4856 / JCM 11019 / LMG 10263 / NCTC 9343 / Onslow / VPI 2553 / EN-2).